The sequence spans 209 residues: Uracil phosphoribosyltransferase (209 aa).

5-phospho-alpha-D-ribose 1-diphosphate contacts are provided by residues Arg79, Arg104, and 131–139 (DPMLATGGS). Uracil contacts are provided by residues Ile194 and 199-201 (GDA). Asp200 provides a ligand contact to 5-phospho-alpha-D-ribose 1-diphosphate.

It belongs to the UPRTase family. The cofactor is Mg(2+).

The enzyme catalyses UMP + diphosphate = 5-phospho-alpha-D-ribose 1-diphosphate + uracil. It functions in the pathway pyrimidine metabolism; UMP biosynthesis via salvage pathway; UMP from uracil: step 1/1. With respect to regulation, allosterically activated by GTP. Catalyzes the conversion of uracil and 5-phospho-alpha-D-ribose 1-diphosphate (PRPP) to UMP and diphosphate. The protein is Uracil phosphoribosyltransferase of Clostridium kluyveri (strain NBRC 12016).